Consider the following 94-residue polypeptide: MRKYETVFILNPALDEEGYKANVEKFKSVIENAGGTVDNVDLWGKRKLAYEVKKVSEGYYTLMNFTADTELPKELDRVFRITDTVIRHMIITQE.

This sequence belongs to the bacterial ribosomal protein bS6 family.

Its function is as follows. Binds together with bS18 to 16S ribosomal RNA. This chain is Small ribosomal subunit protein bS6, found in Clostridium botulinum (strain 657 / Type Ba4).